Reading from the N-terminus, the 478-residue chain is WD repeat-containing protein AAC3 (478 aa).

Disordered stretches follow at residues 33-53 and 106-140; these read HPLF…QQQQ and SQIH…QYTN. Low complexity predominate over residues 106–125; that stretch reads SQIHQQSQQSQLSNNLNSNS. The span at 126–140 shows a compositional bias: polar residues; that stretch reads KESTNIPKTNTQYTN. WD repeat units follow at residues 163–202, 226–268, 270–307, 310–349, 357–396, 399–438, and 440–478; these read GNKK…NSNN, GHDG…GTVS, NSEN…TLKI, FNGE…TTHV, GHTA…CVKT, KSTF…PIHT, and ECSG…GYHS.

Belongs to the THOC3 family.

The sequence is that of WD repeat-containing protein AAC3 (AAC3) from Dictyostelium discoideum (Social amoeba).